The chain runs to 951 residues: Valine--tRNA ligase (951 aa).

Positions 40 to 50 (PNVTGSLHMGH) match the 'HIGH' region motif. The 'KMSKS' region motif lies at 551-555 (KMSKS). An ATP-binding site is contributed by Lys554. Residues 879–950 (MAGLIDVEAE…LLEQKAKIES (72 aa)) adopt a coiled-coil conformation.

The protein belongs to the class-I aminoacyl-tRNA synthetase family. ValS type 1 subfamily. As to quaternary structure, monomer.

Its subcellular location is the cytoplasm. It carries out the reaction tRNA(Val) + L-valine + ATP = L-valyl-tRNA(Val) + AMP + diphosphate. Catalyzes the attachment of valine to tRNA(Val). As ValRS can inadvertently accommodate and process structurally similar amino acids such as threonine, to avoid such errors, it has a 'posttransfer' editing activity that hydrolyzes mischarged Thr-tRNA(Val) in a tRNA-dependent manner. This chain is Valine--tRNA ligase, found in Pseudoalteromonas translucida (strain TAC 125).